A 173-amino-acid chain; its full sequence is Large ribosomal subunit protein uL10 (173 aa).

Belongs to the universal ribosomal protein uL10 family. As to quaternary structure, part of the ribosomal stalk of the 50S ribosomal subunit. The N-terminus interacts with L11 and the large rRNA to form the base of the stalk. The C-terminus forms an elongated spine to which L12 dimers bind in a sequential fashion forming a multimeric L10(L12)X complex.

Its function is as follows. Forms part of the ribosomal stalk, playing a central role in the interaction of the ribosome with GTP-bound translation factors. The polypeptide is Large ribosomal subunit protein uL10 (Bifidobacterium animalis subsp. lactis (strain AD011)).